Reading from the N-terminus, the 337-residue chain is Ketol-acid reductoisomerase (NADP(+)) (337 aa).

One can recognise a KARI N-terminal Rossmann domain in the interval 1–181 (MKIYYEHDAD…GAARAGVIAT (181 aa)). NADP(+) contacts are provided by residues 24 to 27 (FGSQ), Arg-47, Ser-50, Ser-52, and 82 to 85 (DEKQ). His-107 is a catalytic residue. An NADP(+)-binding site is contributed by Gly-133. The region spanning 182 to 328 (TFKDETETDL…SRLRAMMPFL (147 aa)) is the KARI C-terminal knotted domain. Residues Asp-190, Glu-194, Glu-226, and Glu-230 each coordinate Mg(2+). Ser-251 is a binding site for substrate.

The protein belongs to the ketol-acid reductoisomerase family. Mg(2+) serves as cofactor.

The catalysed reaction is (2R)-2,3-dihydroxy-3-methylbutanoate + NADP(+) = (2S)-2-acetolactate + NADPH + H(+). The enzyme catalyses (2R,3R)-2,3-dihydroxy-3-methylpentanoate + NADP(+) = (S)-2-ethyl-2-hydroxy-3-oxobutanoate + NADPH + H(+). It participates in amino-acid biosynthesis; L-isoleucine biosynthesis; L-isoleucine from 2-oxobutanoate: step 2/4. It functions in the pathway amino-acid biosynthesis; L-valine biosynthesis; L-valine from pyruvate: step 2/4. Involved in the biosynthesis of branched-chain amino acids (BCAA). Catalyzes an alkyl-migration followed by a ketol-acid reduction of (S)-2-acetolactate (S2AL) to yield (R)-2,3-dihydroxy-isovalerate. In the isomerase reaction, S2AL is rearranged via a Mg-dependent methyl migration to produce 3-hydroxy-3-methyl-2-ketobutyrate (HMKB). In the reductase reaction, this 2-ketoacid undergoes a metal-dependent reduction by NADPH to yield (R)-2,3-dihydroxy-isovalerate. The chain is Ketol-acid reductoisomerase (NADP(+)) from Thermus thermophilus (strain ATCC BAA-163 / DSM 7039 / HB27).